The primary structure comprises 504 residues: GTPase Der (504 aa).

Residues 3-166 enclose the EngA-type G 1 domain; it reads PVVALVGRPN…QVLAPLAEKL (164 aa). GTP-binding positions include 9–16, 56–60, and 118–121; these read GRPNVGKS, DTGGI, and NKTD. The interval 171–190 is disordered; that stretch reads VDSDENVADDEQDEWDSDFD. Positions 172-190 are enriched in acidic residues; it reads DSDENVADDEQDEWDSDFD. Residues 216-389 form the EngA-type G 2 domain; the sequence is IKIAIVGRPN…SIQEAYQCAT (174 aa). Residues 222-229, 269-273, and 334-337 contribute to the GTP site; these read GRPNVGKS, DTAGV, and NKWD. Residues 390–474 form the KH-like domain; sequence KKMTTSMLTR…PIRVLFQEGN (85 aa).

The protein belongs to the TRAFAC class TrmE-Era-EngA-EngB-Septin-like GTPase superfamily. EngA (Der) GTPase family. In terms of assembly, associates with the 50S ribosomal subunit.

Its function is as follows. GTPase that plays an essential role in the late steps of ribosome biogenesis. The polypeptide is GTPase Der (Glaesserella parasuis serovar 5 (strain SH0165) (Haemophilus parasuis)).